A 281-amino-acid polypeptide reads, in one-letter code: Probable endonuclease 4 (281 aa).

The Zn(2+) site is built by H69, H109, E145, D179, H182, H216, D229, H231, and E261.

Belongs to the AP endonuclease 2 family. It depends on Zn(2+) as a cofactor.

The enzyme catalyses Endonucleolytic cleavage to 5'-phosphooligonucleotide end-products.. In terms of biological role, endonuclease IV plays a role in DNA repair. It cleaves phosphodiester bonds at apurinic or apyrimidinic (AP) sites, generating a 3'-hydroxyl group and a 5'-terminal sugar phosphate. The polypeptide is Probable endonuclease 4 (Chlorobaculum tepidum (strain ATCC 49652 / DSM 12025 / NBRC 103806 / TLS) (Chlorobium tepidum)).